Reading from the N-terminus, the 123-residue chain is Protein Wnt-7a (123 aa).

S1 is lipidated: O-palmitoleoyl serine; by PORCN. Residues 33–61 are disordered linker; sequence VEPVRASRNKRPTFLKIKKPLSYRKPMDT. C89 and C104 are disulfide-bonded. A glycan (N-linked (GlcNAc...) asparagine) is linked at N90.

This sequence belongs to the Wnt family. Forms a soluble 1:1 complex with AFM; this prevents oligomerization and is required for prolonged biological activity. The complex with AFM may represent the physiological form in body fluids. Interacts with FZD5. Interacts with PORCN. Palmitoleoylation is required for efficient binding to frizzled receptors. Depalmitoleoylation leads to Wnt signaling pathway inhibition.

It is found in the secreted. Its subcellular location is the extracellular space. It localises to the extracellular matrix. In terms of biological role, ligand for members of the frizzled family of seven transmembrane receptors that functions in the canonical Wnt/beta-catenin signaling pathway. Plays an important role in embryonic development, including dorsal versus ventral patterning during limb development, skeleton development and urogenital tract development. Required for central nervous system (CNS) angiogenesis and blood-brain barrier regulation. The sequence is that of Protein Wnt-7a (WNT7A) from Meleagris gallopavo (Wild turkey).